An 81-amino-acid chain; its full sequence is Dermaseptin-B7 (81 aa).

Residues 1-22 (MASLKKSLFLVLFLGLVSLSIC) form the signal peptide. Positions 23-44 (EEEKRENEDEEEQEDDEQSEMK) are excised as a propeptide. Residues 24–48 (EEKRENEDEEEQEDDEQSEMKRGLW) form a disordered region. The segment covering 30–40 (EDEEEQEDDEQ) has biased composition (acidic residues). Val-78 bears the Valine amide mark. Positions 80–81 (EQ) are excised as a propeptide.

Belongs to the frog skin active peptide (FSAP) family. Dermaseptin subfamily. In terms of tissue distribution, expressed by the skin glands.

Its subcellular location is the secreted. Its function is as follows. Has antimicrobial activity. This chain is Dermaseptin-B7 (DRG1), found in Phyllomedusa bicolor (Two-colored leaf frog).